The sequence spans 236 residues: Large ribosomal subunit protein uL1 (236 aa).

The protein belongs to the universal ribosomal protein uL1 family. Part of the 50S ribosomal subunit.

In terms of biological role, binds directly to 23S rRNA. The L1 stalk is quite mobile in the ribosome, and is involved in E site tRNA release. Functionally, protein L1 is also a translational repressor protein, it controls the translation of the L11 operon by binding to its mRNA. The polypeptide is Large ribosomal subunit protein uL1 (Corynebacterium efficiens (strain DSM 44549 / YS-314 / AJ 12310 / JCM 11189 / NBRC 100395)).